An 89-amino-acid chain; its full sequence is MSITVERKKALISEYADLEKNTGSVEVQCAILTERIINLTQHCKINFKDFHSKRGLLMLVSSRRKLLSYLKKKDLNRYTQLINRLGLRK.

It belongs to the universal ribosomal protein uS15 family. In terms of assembly, part of the 30S ribosomal subunit. Forms a bridge to the 50S subunit in the 70S ribosome, contacting the 23S rRNA.

Its function is as follows. One of the primary rRNA binding proteins, it binds directly to 16S rRNA where it helps nucleate assembly of the platform of the 30S subunit by binding and bridging several RNA helices of the 16S rRNA. Functionally, forms an intersubunit bridge (bridge B4) with the 23S rRNA of the 50S subunit in the ribosome. The protein is Small ribosomal subunit protein uS15 of Orientia tsutsugamushi (strain Ikeda) (Rickettsia tsutsugamushi).